Here is a 337-residue protein sequence, read N- to C-terminus: RNA 3'-terminal phosphate cyclase (337 aa).

ATP-binding positions include Gln101 and 282-285; that span reads HMSD. The active-site Tele-AMP-histidine intermediate is the His306.

It belongs to the RNA 3'-terminal cyclase family. Type 1 subfamily.

It localises to the cytoplasm. The enzyme catalyses a 3'-end 3'-phospho-ribonucleotide-RNA + ATP = a 3'-end 2',3'-cyclophospho-ribonucleotide-RNA + AMP + diphosphate. In terms of biological role, catalyzes the conversion of 3'-phosphate to a 2',3'-cyclic phosphodiester at the end of RNA. The mechanism of action of the enzyme occurs in 3 steps: (A) adenylation of the enzyme by ATP; (B) transfer of adenylate to an RNA-N3'P to produce RNA-N3'PP5'A; (C) and attack of the adjacent 2'-hydroxyl on the 3'-phosphorus in the diester linkage to produce the cyclic end product. The biological role of this enzyme is unknown but it is likely to function in some aspects of cellular RNA processing. This Saccharolobus solfataricus (strain ATCC 35092 / DSM 1617 / JCM 11322 / P2) (Sulfolobus solfataricus) protein is RNA 3'-terminal phosphate cyclase (rtcA).